The chain runs to 127 residues: Small ribosomal subunit protein uS11 (127 aa).

It belongs to the universal ribosomal protein uS11 family. As to quaternary structure, part of the 30S ribosomal subunit. Interacts with proteins S7 and S18. Binds to IF-3.

Its function is as follows. Located on the platform of the 30S subunit, it bridges several disparate RNA helices of the 16S rRNA. Forms part of the Shine-Dalgarno cleft in the 70S ribosome. The polypeptide is Small ribosomal subunit protein uS11 (Rickettsia africae (strain ESF-5)).